The chain runs to 136 residues: Large ribosomal subunit protein bL20 (136 aa).

Belongs to the bacterial ribosomal protein bL20 family.

Binds directly to 23S ribosomal RNA and is necessary for the in vitro assembly process of the 50S ribosomal subunit. It is not involved in the protein synthesizing functions of that subunit. This Tropheryma whipplei (strain TW08/27) (Whipple's bacillus) protein is Large ribosomal subunit protein bL20.